A 513-amino-acid polypeptide reads, in one-letter code: ATP synthase subunit alpha 2 (513 aa).

169-176 (GDRQTGKT) contributes to the ATP binding site.

Belongs to the ATPase alpha/beta chains family. F-type ATPases have 2 components, CF(1) - the catalytic core - and CF(0) - the membrane proton channel. CF(1) has five subunits: alpha(3), beta(3), gamma(1), delta(1), epsilon(1). CF(0) has three main subunits: a(1), b(2) and c(9-12). The alpha and beta chains form an alternating ring which encloses part of the gamma chain. CF(1) is attached to CF(0) by a central stalk formed by the gamma and epsilon chains, while a peripheral stalk is formed by the delta and b chains.

The protein resides in the cell inner membrane. The catalysed reaction is ATP + H2O + 4 H(+)(in) = ADP + phosphate + 5 H(+)(out). Functionally, produces ATP from ADP in the presence of a proton gradient across the membrane. The alpha chain is a regulatory subunit. This chain is ATP synthase subunit alpha 2, found in Photobacterium profundum (strain SS9).